The following is a 294-amino-acid chain: Eukaryotic translation initiation factor 3 subunit F (294 aa).

One can recognise an MPN domain in the interval 7–155 (VNVHPGVYMN…VRAYLRSKAG (149 aa)).

This sequence belongs to the eIF-3 subunit F family. As to quaternary structure, component of the eukaryotic translation initiation factor 3 (eIF-3) complex.

The protein localises to the cytoplasm. Component of the eukaryotic translation initiation factor 3 (eIF-3) complex, which is involved in protein synthesis of a specialized repertoire of mRNAs and, together with other initiation factors, stimulates binding of mRNA and methionyl-tRNAi to the 40S ribosome. The eIF-3 complex specifically targets and initiates translation of a subset of mRNAs involved in cell proliferation. In Caenorhabditis elegans, this protein is Eukaryotic translation initiation factor 3 subunit F.